The chain runs to 351 residues: N-formyl peptide receptor 2 (351 aa).

Over Met1–Ile27 the chain is Extracellular. Residue Asn4 is glycosylated (N-linked (GlcNAc...) asparagine). A helical membrane pass occupies residues Leu28 to Val50. Topologically, residues Ala51–Thr61 are cytoplasmic. The chain crosses the membrane as a helical span at residues Ile62–Val83. Topologically, residues Ser84–Leu100 are extracellular. An intrachain disulfide couples Cys98 to Cys176. A helical transmembrane segment spans residues Ile101–Leu121. At Asp122–Ser140 the chain is on the cytoplasmic side. The chain crosses the membrane as a helical span at residues Leu141–Leu162. Topologically, residues Phe163–Arg205 are extracellular. Residues Phe206 to Ala226 traverse the membrane as a helical segment. At Lys227–Val242 the chain is on the cytoplasmic side. Residues Leu243 to Val266 form a helical membrane-spanning segment. Over Trp267–Pro286 the chain is Extracellular. A helical transmembrane segment spans residues Thr287–Gly306. The Cytoplasmic portion of the chain corresponds to Gln307–Met351. The segment at Leu325 to Met351 is disordered. Residues Ser329 to Ser341 show a composition bias toward polar residues.

The protein belongs to the G-protein coupled receptor 1 family. In terms of assembly, interacts with Amyloid-beta protein 42, product of APP; the interaction takes place at the cell surface and the complex is then rapidly internalized. (Microbial infection) Interacts with Staphylococcus aureus protein SSL13; this interaction leads to the activation of neutrophils. As to expression, detected in lung, bone marrow, neutrophils, spleen and testis.

The protein localises to the cell membrane. Low affinity receptor for N-formyl-methionyl peptides, which are powerful neutrophil chemotactic factors. Binding of FMLP to the receptor causes activation of neutrophils. This response is mediated via a G-protein that activates a phosphatidylinositol-calcium second messenger system. The activation of LXA4R could result in an anti-inflammatory outcome counteracting the actions of pro-inflammatory signals such as LTB4 (leukotriene B4). Receptor for the chemokine-like protein FAM19A5, mediating FAM19A5-stimulated macrophage chemotaxis and the inhibitory effect on TNFSF11/RANKL-induced osteoclast differentiation. Acts as a receptor for humanin. In Homo sapiens (Human), this protein is N-formyl peptide receptor 2 (FPR2).